Consider the following 390-residue polypeptide: 1-deoxy-D-xylulose 5-phosphate reductoisomerase (390 aa).

NADPH is bound by residues threonine 10, glycine 11, serine 12, isoleucine 13, alanine 36, lysine 37, asparagine 38, and asparagine 122. Lysine 123 provides a ligand contact to 1-deoxy-D-xylulose 5-phosphate. NADPH is bound at residue glutamate 124. Residue aspartate 148 coordinates Mn(2+). Residues serine 149, glutamate 150, serine 174, and histidine 197 each coordinate 1-deoxy-D-xylulose 5-phosphate. Glutamate 150 lines the Mn(2+) pocket. Glycine 203 is a binding site for NADPH. Residues serine 210, asparagine 215, lysine 216, and glutamate 219 each coordinate 1-deoxy-D-xylulose 5-phosphate. Glutamate 219 contributes to the Mn(2+) binding site.

It belongs to the DXR family. Requires Mg(2+) as cofactor. It depends on Mn(2+) as a cofactor.

The enzyme catalyses 2-C-methyl-D-erythritol 4-phosphate + NADP(+) = 1-deoxy-D-xylulose 5-phosphate + NADPH + H(+). The protein operates within isoprenoid biosynthesis; isopentenyl diphosphate biosynthesis via DXP pathway; isopentenyl diphosphate from 1-deoxy-D-xylulose 5-phosphate: step 1/6. Functionally, catalyzes the NADPH-dependent rearrangement and reduction of 1-deoxy-D-xylulose-5-phosphate (DXP) to 2-C-methyl-D-erythritol 4-phosphate (MEP). In Trichlorobacter lovleyi (strain ATCC BAA-1151 / DSM 17278 / SZ) (Geobacter lovleyi), this protein is 1-deoxy-D-xylulose 5-phosphate reductoisomerase.